An 889-amino-acid polypeptide reads, in one-letter code: Protein SEY1 homolog (889 aa).

Over 1-801 the chain is Cytoplasmic; the sequence is MDTKTQIIDY…ETGAKMSLKN (801 aa). The GB1/RHD3-type G domain maps to 31-277; it reads GFNYNVIAIL…IPSDGFAHYC (247 aa). Residue 41–48 coordinates GTP; the sequence is GSQSSGKS. The disordered stretch occupies residues 429–449; it reads RKDGKGGSSPSAGDKKDTKDT. The stretch at 679–699 forms a coiled coil; sequence LDEIMDVLKSKLDEISDNLSS. The helical transmembrane segment at 802–822 threads the bilayer; it reads VPLFFWVILLILGWNELLFFT. Over 823-825 the chain is Lumenal; that stretch reads RFF. The helical transmembrane segment at 826 to 846 threads the bilayer; sequence FRLNIILPLFLAAAVILSTLV. At 847 to 889 the chain is on the cytoplasmic side; sequence FNGNMEVLSIINKAVFFLAKNSFGVYRQLQAMGGKAAQGAAAD.

This sequence belongs to the TRAFAC class dynamin-like GTPase superfamily. GB1/RHD3 GTPase family. RHD3 subfamily.

Its subcellular location is the endoplasmic reticulum membrane. Its function is as follows. Probable GTP-binding protein involved in generating and maintaining the structure of the tubular endoplasmic reticulum network. This chain is Protein SEY1 homolog, found in Plasmodium vivax (strain Salvador I).